The sequence spans 86 residues: Large ribosomal subunit protein bL27 (86 aa).

The tract at residues M1–L21 is disordered.

The protein belongs to the bacterial ribosomal protein bL27 family.

The protein is Large ribosomal subunit protein bL27 of Rubrobacter xylanophilus (strain DSM 9941 / JCM 11954 / NBRC 16129 / PRD-1).